An 87-amino-acid polypeptide reads, in one-letter code: Small ribosomal subunit protein bS16 (87 aa).

This sequence belongs to the bacterial ribosomal protein bS16 family.

The polypeptide is Small ribosomal subunit protein bS16 (Variovorax paradoxus (strain S110)).